Here is a 338-residue protein sequence, read N- to C-terminus: Ketol-acid reductoisomerase (NADP(+)) (338 aa).

Residues 1-181 form the KARI N-terminal Rossmann domain; the sequence is MKVFYDKDCD…GGGKAGIIET (181 aa). NADP(+) contacts are provided by residues 24 to 27, arginine 47, and serine 52; that span reads YGSQ. Histidine 107 is an active-site residue. Glycine 133 provides a ligand contact to NADP(+). One can recognise a KARI C-terminal knotted domain in the interval 182–327; sequence TFREETETDL…EKLRAMMPWI (146 aa). Positions 190, 194, 226, and 230 each coordinate Mg(2+). Serine 251 is a substrate binding site.

The protein belongs to the ketol-acid reductoisomerase family. It depends on Mg(2+) as a cofactor.

The catalysed reaction is (2R)-2,3-dihydroxy-3-methylbutanoate + NADP(+) = (2S)-2-acetolactate + NADPH + H(+). It carries out the reaction (2R,3R)-2,3-dihydroxy-3-methylpentanoate + NADP(+) = (S)-2-ethyl-2-hydroxy-3-oxobutanoate + NADPH + H(+). The protein operates within amino-acid biosynthesis; L-isoleucine biosynthesis; L-isoleucine from 2-oxobutanoate: step 2/4. Its pathway is amino-acid biosynthesis; L-valine biosynthesis; L-valine from pyruvate: step 2/4. Functionally, involved in the biosynthesis of branched-chain amino acids (BCAA). Catalyzes an alkyl-migration followed by a ketol-acid reduction of (S)-2-acetolactate (S2AL) to yield (R)-2,3-dihydroxy-isovalerate. In the isomerase reaction, S2AL is rearranged via a Mg-dependent methyl migration to produce 3-hydroxy-3-methyl-2-ketobutyrate (HMKB). In the reductase reaction, this 2-ketoacid undergoes a metal-dependent reduction by NADPH to yield (R)-2,3-dihydroxy-isovalerate. This chain is Ketol-acid reductoisomerase (NADP(+)), found in Albidiferax ferrireducens (strain ATCC BAA-621 / DSM 15236 / T118) (Rhodoferax ferrireducens).